Reading from the N-terminus, the 173-residue chain is ADP-ribose 1''-phosphate phosphatase (173 aa).

The Macro domain maps to 1 to 173 (MIRYIKGDLL…YDVEFNVYVI (173 aa)). Residues 7 to 9 (GDL), 26 to 28 (ACN), 33 to 38 (WGGGIA), and 145 to 151 (INAGIFA) contribute to the substrate site.

Belongs to the POA1 family.

The catalysed reaction is ADP-alpha-D-ribose 1''-phosphate + H2O = ADP-D-ribose + phosphate. Highly specific phosphatase involved in the metabolism of ADP-ribose 1''-phosphate (Appr1p) which is produced as a consequence of tRNA splicing. The sequence is that of ADP-ribose 1''-phosphate phosphatase (POA1) from Scheffersomyces stipitis (strain ATCC 58785 / CBS 6054 / NBRC 10063 / NRRL Y-11545) (Yeast).